The chain runs to 215 residues: Pyridoxine/pyridoxamine 5'-phosphate oxidase (215 aa).

Substrate-binding positions include 9-12 (RRDY) and Lys-69. FMN is bound by residues 64–69 (RVLLLK), 79–80 (FS), Lys-86, and Gln-108. The substrate site is built by Tyr-126, Arg-130, and Ser-134. Residues 143–144 (QS) and Trp-188 contribute to the FMN site. Residue 194–196 (RLH) participates in substrate binding. An FMN-binding site is contributed by Arg-198.

The protein belongs to the pyridoxamine 5'-phosphate oxidase family. Homodimer. FMN is required as a cofactor.

It carries out the reaction pyridoxamine 5'-phosphate + O2 + H2O = pyridoxal 5'-phosphate + H2O2 + NH4(+). The enzyme catalyses pyridoxine 5'-phosphate + O2 = pyridoxal 5'-phosphate + H2O2. It participates in cofactor metabolism; pyridoxal 5'-phosphate salvage; pyridoxal 5'-phosphate from pyridoxamine 5'-phosphate: step 1/1. Its pathway is cofactor metabolism; pyridoxal 5'-phosphate salvage; pyridoxal 5'-phosphate from pyridoxine 5'-phosphate: step 1/1. Functionally, catalyzes the oxidation of either pyridoxine 5'-phosphate (PNP) or pyridoxamine 5'-phosphate (PMP) into pyridoxal 5'-phosphate (PLP). The sequence is that of Pyridoxine/pyridoxamine 5'-phosphate oxidase from Azotobacter vinelandii (strain DJ / ATCC BAA-1303).